Consider the following 97-residue polypeptide: Putative membrane protein insertion efficiency factor (97 aa).

The protein belongs to the UPF0161 family.

It is found in the cell membrane. Functionally, could be involved in insertion of integral membrane proteins into the membrane. In Lactobacillus gasseri (strain ATCC 33323 / DSM 20243 / BCRC 14619 / CIP 102991 / JCM 1131 / KCTC 3163 / NCIMB 11718 / NCTC 13722 / AM63), this protein is Putative membrane protein insertion efficiency factor.